Reading from the N-terminus, the 447-residue chain is N-succinylarginine dihydrolase (447 aa).

Substrate contacts are provided by residues 19-28 (AGLSFGNEAS), Asn110, and 137-138 (HR). Residue Glu174 is part of the active site. Arg212 provides a ligand contact to substrate. His248 is a catalytic residue. Residues Asp250 and Asn359 each contribute to the substrate site. Catalysis depends on Cys365, which acts as the Nucleophile.

Belongs to the succinylarginine dihydrolase family. In terms of assembly, homodimer.

It carries out the reaction N(2)-succinyl-L-arginine + 2 H2O + 2 H(+) = N(2)-succinyl-L-ornithine + 2 NH4(+) + CO2. The protein operates within amino-acid degradation; L-arginine degradation via AST pathway; L-glutamate and succinate from L-arginine: step 2/5. Its function is as follows. Catalyzes the hydrolysis of N(2)-succinylarginine into N(2)-succinylornithine, ammonia and CO(2). The protein is N-succinylarginine dihydrolase of Escherichia coli O7:K1 (strain IAI39 / ExPEC).